Reading from the N-terminus, the 394-residue chain is Putative 8-amino-7-oxononanoate synthase (394 aa).

Arginine 21 is a substrate binding site. 107 to 108 (GY) lines the pyridoxal 5'-phosphate pocket. A substrate-binding site is contributed by histidine 132. Pyridoxal 5'-phosphate contacts are provided by residues serine 180, 205-208 (DEAH), and 236-239 (TLSK). Lysine 239 is modified (N6-(pyridoxal phosphate)lysine). Threonine 361 provides a ligand contact to substrate.

It belongs to the class-II pyridoxal-phosphate-dependent aminotransferase family. BioF subfamily. In terms of assembly, homodimer. It depends on pyridoxal 5'-phosphate as a cofactor.

The catalysed reaction is 6-carboxyhexanoyl-[ACP] + L-alanine + H(+) = (8S)-8-amino-7-oxononanoate + holo-[ACP] + CO2. It functions in the pathway cofactor biosynthesis; biotin biosynthesis. In terms of biological role, catalyzes the decarboxylative condensation of pimeloyl-[acyl-carrier protein] and L-alanine to produce 8-amino-7-oxononanoate (AON), [acyl-carrier protein], and carbon dioxide. The protein is Putative 8-amino-7-oxononanoate synthase (bioF) of Acaryochloris marina (strain MBIC 11017).